Consider the following 116-residue polypeptide: MAGRSGDSDEELIRTVRLIKLLYQSNPPPNPEGTRQARRNRRRRWRERQRQIHSISERILGTYLGRSAEPVPLQLPPLERLTLDCNEDCGTSGTQGVGSPQILVESPTVLESGTKE.

Phosphoserine; by host CK2 is present on residues Ser-5 and Ser-8. The homomultimerization stretch occupies residues 18-26 (LIKLLYQSN). Positions 21–49 (LLYQSNPPPNPEGTRQARRNRRRRWRERQ) are disordered. The Nuclear localization signal and RNA-binding (RRE) signature appears at 34-50 (TRQARRNRRRRWRERQR). Basic residues predominate over residues 36–47 (QARRNRRRRWRE). The Nuclear export signal and binding to XPO1 signature appears at 73-84 (LQLPPLERLTLD). 2 positions are modified to phosphoserine; by host: Ser-92 and Ser-99. A disordered region spans residues 92-116 (SGTQGVGSPQILVESPTVLESGTKE).

Belongs to the HIV-1 REV protein family. Homomultimer; when bound to the RRE. Multimeric assembly is essential for activity and may involve XPO1. Binds to human KPNB1, XPO1, TNPO1, RANBP5 and IPO7. Interacts with the viral Integrase. Interacts with human KHDRBS1. Interacts with human NAP1; this interaction decreases Rev multimerization and stimulates its activity. Interacts with human DEAD-box helicases DDX3 and DDX24; these interactions may serve for viral RNA export to the cytoplasm and packaging, respectively. Interacts with human PSIP1; this interaction may inhibit HIV-1 DNA integration by promoting dissociation of the Integrase-LEDGF/p75 complex. Post-translationally, asymmetrically arginine dimethylated at one site by host PRMT6. Methylation impairs the RNA-binding activity and export of viral RNA from the nucleus to the cytoplasm. Phosphorylated by protein kinase CK2. Presence of, and maybe binding to the N-terminus of the regulatory beta subunit of CK2 is necessary for CK2-mediated Rev's phosphorylation.

It is found in the host nucleus. The protein localises to the host nucleolus. Its subcellular location is the host cytoplasm. In terms of biological role, escorts unspliced or incompletely spliced viral pre-mRNAs (late transcripts) out of the nucleus of infected cells. These pre-mRNAs carry a recognition sequence called Rev responsive element (RRE) located in the env gene, that is not present in fully spliced viral mRNAs (early transcripts). This function is essential since most viral proteins are translated from unspliced or partially spliced pre-mRNAs which cannot exit the nucleus by the pathway used by fully processed cellular mRNAs. Rev itself is translated from a fully spliced mRNA that readily exits the nucleus. Rev's nuclear localization signal (NLS) binds directly to KPNB1/Importin beta-1 without previous binding to KPNA1/Importin alpha-1. KPNB1 binds to the GDP bound form of RAN (Ran-GDP) and targets Rev to the nucleus. In the nucleus, the conversion from Ran-GDP to Ran-GTP dissociates Rev from KPNB1 and allows Rev's binding to the RRE in viral pre-mRNAs. Rev multimerization on the RRE via cooperative assembly exposes its nuclear export signal (NES) to the surface. Rev can then form a complex with XPO1/CRM1 and Ran-GTP, leading to nuclear export of the complex. Conversion from Ran-GTP to Ran-GDP mediates dissociation of the Rev/RRE/XPO1/RAN complex, so that Rev can return to the nucleus for a subsequent round of export. Beside KPNB1, also seems to interact with TNPO1/Transportin-1, RANBP5/IPO5 and IPO7/RANBP7 for nuclear import. The nucleoporin-like HRB/RIP is an essential cofactor that probably indirectly interacts with Rev to release HIV RNAs from the perinuclear region to the cytoplasm. This is Protein Rev from Homo sapiens (Human).